A 230-amino-acid chain; its full sequence is UPF0502 protein Patl_1161 (230 aa).

Belongs to the UPF0502 family.

The chain is UPF0502 protein Patl_1161 from Pseudoalteromonas atlantica (strain T6c / ATCC BAA-1087).